Consider the following 629-residue polypeptide: Phosphomethylpyrimidine synthase (629 aa).

Residues 1-20 form a disordered region; sequence MSTTLKNAAHLSESAQVDSG. Residues N233, M262, Y291, H327, 347 to 349, 388 to 391, and E427 each bind substrate; these read SRG and DGLR. Residue H431 coordinates Zn(2+). Y454 provides a ligand contact to substrate. H495 contributes to the Zn(2+) binding site. [4Fe-4S] cluster is bound by residues C575, C578, and C583.

This sequence belongs to the ThiC family. In terms of assembly, homodimer. Requires [4Fe-4S] cluster as cofactor.

The enzyme catalyses 5-amino-1-(5-phospho-beta-D-ribosyl)imidazole + S-adenosyl-L-methionine = 4-amino-2-methyl-5-(phosphooxymethyl)pyrimidine + CO + 5'-deoxyadenosine + formate + L-methionine + 3 H(+). It functions in the pathway cofactor biosynthesis; thiamine diphosphate biosynthesis. Its function is as follows. Catalyzes the synthesis of the hydroxymethylpyrimidine phosphate (HMP-P) moiety of thiamine from aminoimidazole ribotide (AIR) in a radical S-adenosyl-L-methionine (SAM)-dependent reaction. This Pseudomonas savastanoi pv. phaseolicola (strain 1448A / Race 6) (Pseudomonas syringae pv. phaseolicola (strain 1448A / Race 6)) protein is Phosphomethylpyrimidine synthase.